The following is a 357-amino-acid chain: DNA replication and repair protein RecF (357 aa).

ATP is bound at residue glycine 30 to threonine 37.

Belongs to the RecF family.

Its subcellular location is the cytoplasm. Its function is as follows. The RecF protein is involved in DNA metabolism; it is required for DNA replication and normal SOS inducibility. RecF binds preferentially to single-stranded, linear DNA. It also seems to bind ATP. This Escherichia coli O6:K15:H31 (strain 536 / UPEC) protein is DNA replication and repair protein RecF.